The primary structure comprises 335 residues: Biotin synthase (335 aa).

The 229-residue stretch at tyrosine 46–arginine 274 folds into the Radical SAM core domain. [4Fe-4S] cluster contacts are provided by cysteine 61, cysteine 65, and cysteine 68. Positions 105, 137, 197, and 269 each coordinate [2Fe-2S] cluster.

This sequence belongs to the radical SAM superfamily. Biotin synthase family. As to quaternary structure, homodimer. [4Fe-4S] cluster is required as a cofactor. It depends on [2Fe-2S] cluster as a cofactor.

The enzyme catalyses (4R,5S)-dethiobiotin + (sulfur carrier)-SH + 2 reduced [2Fe-2S]-[ferredoxin] + 2 S-adenosyl-L-methionine = (sulfur carrier)-H + biotin + 2 5'-deoxyadenosine + 2 L-methionine + 2 oxidized [2Fe-2S]-[ferredoxin]. It functions in the pathway cofactor biosynthesis; biotin biosynthesis; biotin from 7,8-diaminononanoate: step 2/2. Catalyzes the conversion of dethiobiotin (DTB) to biotin by the insertion of a sulfur atom into dethiobiotin via a radical-based mechanism. The protein is Biotin synthase of Prochlorococcus marinus subsp. pastoris (strain CCMP1986 / NIES-2087 / MED4).